Reading from the N-terminus, the 184-residue chain is Luciferin-binding protein (184 aa).

EF-hand domains follow at residues 10–45, 46–81, 98–133, and 134–169; these read YHLRKMKTRMKRVDVTGDGFISREDYELIAVRIAKI, AKLSAEKAEETRQEFLRVADQLGLAPGVRISVEEAA, MAVIQSLIMYDCIDTDKDGYVSLPEFKAFLQAVGPD, and ITDDKAITCFNTLDFNKNGQISRDEFLVTVNDFLFG. Ca(2+)-binding residues include Asp-111, Asp-113, Asp-115, Tyr-117, Glu-122, Asp-147, Asn-149, Asn-151, Gln-153, and Glu-158.

This Ca(2+)-dependent protein binds to luciferin. The luciferin of LBP is capable of reacting with luciferase and O(2) only when calcium is bound. This chain is Luciferin-binding protein, found in Renilla reniformis (Sea pansy).